A 1362-amino-acid polypeptide reads, in one-letter code: DNA-directed RNA polymerase subunit beta (1362 aa).

Belongs to the RNA polymerase beta chain family. As to quaternary structure, the RNAP catalytic core consists of 2 alpha, 1 beta, 1 beta' and 1 omega subunit. When a sigma factor is associated with the core the holoenzyme is formed, which can initiate transcription.

It catalyses the reaction RNA(n) + a ribonucleoside 5'-triphosphate = RNA(n+1) + diphosphate. In terms of biological role, DNA-dependent RNA polymerase catalyzes the transcription of DNA into RNA using the four ribonucleoside triphosphates as substrates. The protein is DNA-directed RNA polymerase subunit beta of Acinetobacter baumannii (strain AB307-0294).